The chain runs to 278 residues: Sulfur carrier protein FdhD (278 aa).

Residue cysteine 121 is the Cysteine persulfide intermediate of the active site. 260 to 265 contacts Mo-bis(molybdopterin guanine dinucleotide); it reads FCKPGR.

Belongs to the FdhD family.

The protein localises to the cytoplasm. In terms of biological role, required for formate dehydrogenase (FDH) activity. Acts as a sulfur carrier protein that transfers sulfur from IscS to the molybdenum cofactor prior to its insertion into FDH. The polypeptide is Sulfur carrier protein FdhD (Salmonella agona (strain SL483)).